The following is a 352-amino-acid chain: tRNA pseudouridine synthase D (352 aa).

Residue Asp-81 is the Nucleophile of the active site. The 147-residue stretch at 157–303 folds into the TRUD domain; the sequence is GVPNYFGTQR…MDHERRILRL (147 aa).

It belongs to the pseudouridine synthase TruD family.

It carries out the reaction uridine(13) in tRNA = pseudouridine(13) in tRNA. Functionally, responsible for synthesis of pseudouridine from uracil-13 in transfer RNAs. In Pseudomonas putida (strain ATCC 47054 / DSM 6125 / CFBP 8728 / NCIMB 11950 / KT2440), this protein is tRNA pseudouridine synthase D.